The following is a 185-amino-acid chain: Small ribosomal subunit protein uS7 (185 aa).

It belongs to the universal ribosomal protein uS7 family. As to quaternary structure, part of the 30S ribosomal subunit.

In terms of biological role, one of the primary rRNA binding proteins, it binds directly to 16S rRNA where it nucleates assembly of the head domain of the 30S subunit. Is located at the subunit interface close to the decoding center. The chain is Small ribosomal subunit protein uS7 from Methanosarcina barkeri (strain Fusaro / DSM 804).